The primary structure comprises 379 residues: Dual-specificity RNA methyltransferase RlmN (379 aa).

Glu90 serves as the catalytic Proton acceptor. The Radical SAM core domain maps to 96–348 (EPSRGTLCVS…TTVRKTRGDD (253 aa)). Cys103 and Cys353 form a disulfide bridge. Cys110, Cys114, and Cys117 together coordinate [4Fe-4S] cluster. S-adenosyl-L-methionine contacts are provided by residues 179 to 180 (GE), Ser211, 233 to 235 (SLH), and Asn310. The active-site S-methylcysteine intermediate is the Cys353.

It belongs to the radical SAM superfamily. RlmN family. [4Fe-4S] cluster serves as cofactor.

Its subcellular location is the cytoplasm. It carries out the reaction adenosine(2503) in 23S rRNA + 2 reduced [2Fe-2S]-[ferredoxin] + 2 S-adenosyl-L-methionine = 2-methyladenosine(2503) in 23S rRNA + 5'-deoxyadenosine + L-methionine + 2 oxidized [2Fe-2S]-[ferredoxin] + S-adenosyl-L-homocysteine. It catalyses the reaction adenosine(37) in tRNA + 2 reduced [2Fe-2S]-[ferredoxin] + 2 S-adenosyl-L-methionine = 2-methyladenosine(37) in tRNA + 5'-deoxyadenosine + L-methionine + 2 oxidized [2Fe-2S]-[ferredoxin] + S-adenosyl-L-homocysteine. Functionally, specifically methylates position 2 of adenine 2503 in 23S rRNA and position 2 of adenine 37 in tRNAs. m2A2503 modification seems to play a crucial role in the proofreading step occurring at the peptidyl transferase center and thus would serve to optimize ribosomal fidelity. This chain is Dual-specificity RNA methyltransferase RlmN, found in Nitrosomonas europaea (strain ATCC 19718 / CIP 103999 / KCTC 2705 / NBRC 14298).